Reading from the N-terminus, the 177-residue chain is Parathyroid hormone-related protein (177 aa).

The signal sequence occupies residues 1 to 24 (MLRRLVQQWSVLVFLLSYSVPSRG). Residues 25–34 (RSVEGLGRRL) constitute a propeptide that is removed on maturation. Residues 57–68 (RFFLHHLIAEIH) form an important for receptor binding region. Positions 74–177 (ATSEVSPNSK…TSLEPSSRTH (104 aa)) are disordered. Residues 76–90 (SEVSPNSKPAPNTKN) are compositionally biased toward polar residues. The Nuclear localization signal signature appears at 108–129 (TNKVETYKEQPLKTPGKKKKGK). The segment covering 109-118 (NKVETYKEQP) has biased composition (basic and acidic residues). The span at 122-132 (PGKKKKGKPGK) shows a compositional bias: basic residues. Low complexity predominate over residues 161 to 177 (PHTSPTSTSLEPSSRTH).

The protein belongs to the parathyroid hormone family. In terms of assembly, PTHrP interacts with PTH1R (via N-terminal extracellular domain). Post-translationally, there are several secretory forms, including osteostatin, arising from endoproteolytic cleavage of the initial translation product. Each of these secretory forms is believed to have one or more of its own receptors that mediates the normal paracrine, autocrine and endocrine actions.

The protein resides in the secreted. It is found in the cytoplasm. Its subcellular location is the nucleus. In terms of biological role, neuroendocrine peptide which is a critical regulator of cellular and organ growth, development, migration, differentiation and survival and of epithelial calcium ion transport. Acts by binding to its receptor, PTH1R, activating G protein-coupled receptor signaling. Regulates endochondral bone development and epithelial-mesenchymal interactions during the formation of the mammary glands and teeth. Required for skeletal homeostasis. Promotes mammary mesenchyme differentiation and bud outgrowth by modulating mesenchymal cell responsiveness to BMPs. Up-regulates BMPR1A expression in the mammary mesenchyme and this increases the sensitivity of these cells to BMPs and allows them to respond to BMP4 in a paracrine and/or autocrine fashion. BMP4 signaling in the mesenchyme, in turn, triggers epithelial outgrowth and augments MSX2 expression, which causes the mammary mesenchyme to inhibit hair follicle formation within the nipple sheath. Functionally, potent inhibitor of osteoclastic bone resorption. The protein is Parathyroid hormone-related protein (Pthlh) of Rattus norvegicus (Rat).